A 99-amino-acid chain; its full sequence is NADH-ubiquinone oxidoreductase chain 4L (99 aa).

3 consecutive transmembrane segments (helical) span residues Met4–Ser24, Leu29–Phe49, and Phe63–Ile83.

The protein belongs to the complex I subunit 4L family.

The protein localises to the mitochondrion membrane. It carries out the reaction a ubiquinone + NADH + 5 H(+)(in) = a ubiquinol + NAD(+) + 4 H(+)(out). Functionally, core subunit of the mitochondrial membrane respiratory chain NADH dehydrogenase (Complex I) that is believed to belong to the minimal assembly required for catalysis. Complex I functions in the transfer of electrons from NADH to the respiratory chain. The immediate electron acceptor for the enzyme is believed to be ubiquinone. The chain is NADH-ubiquinone oxidoreductase chain 4L (mt:ND4L) from Anopheles gambiae (African malaria mosquito).